Here is a 286-residue protein sequence, read N- to C-terminus: Shikimate dehydrogenase (NADP(+)) (286 aa).

Shikimate is bound by residues 21-23 (TLS) and threonine 68. Lysine 72 functions as the Proton acceptor in the catalytic mechanism. Glutamate 84 contacts NADP(+). Asparagine 93 and aspartate 108 together coordinate shikimate. Residues 132–136 (GNGGA) and leucine 230 contribute to the NADP(+) site. Position 232 (tyrosine 232) interacts with shikimate. Glycine 253 contributes to the NADP(+) binding site.

This sequence belongs to the shikimate dehydrogenase family. As to quaternary structure, homodimer.

The catalysed reaction is shikimate + NADP(+) = 3-dehydroshikimate + NADPH + H(+). It participates in metabolic intermediate biosynthesis; chorismate biosynthesis; chorismate from D-erythrose 4-phosphate and phosphoenolpyruvate: step 4/7. In terms of biological role, involved in the biosynthesis of the chorismate, which leads to the biosynthesis of aromatic amino acids. Catalyzes the reversible NADPH linked reduction of 3-dehydroshikimate (DHSA) to yield shikimate (SA). The sequence is that of Shikimate dehydrogenase (NADP(+)) from Microcystis aeruginosa (strain NIES-843 / IAM M-2473).